A 697-amino-acid polypeptide reads, in one-letter code: DNA ligase (697 aa).

NAD(+) is bound by residues Asp34 to Asp38, Ser83 to Leu84, and Glu114. Catalysis depends on Lys116, which acts as the N6-AMP-lysine intermediate. Positions 137, 171, 315, and 339 each coordinate NAD(+). Positions 430, 433, 448, and 453 each coordinate Zn(2+). Residues Lys616–Ala697 enclose the BRCT domain.

It belongs to the NAD-dependent DNA ligase family. LigA subfamily. Requires Mg(2+) as cofactor. It depends on Mn(2+) as a cofactor.

The catalysed reaction is NAD(+) + (deoxyribonucleotide)n-3'-hydroxyl + 5'-phospho-(deoxyribonucleotide)m = (deoxyribonucleotide)n+m + AMP + beta-nicotinamide D-nucleotide.. In terms of biological role, DNA ligase that catalyzes the formation of phosphodiester linkages between 5'-phosphoryl and 3'-hydroxyl groups in double-stranded DNA using NAD as a coenzyme and as the energy source for the reaction. It is essential for DNA replication and repair of damaged DNA. This chain is DNA ligase, found in Mycoplasmopsis synoviae (strain 53) (Mycoplasma synoviae).